Reading from the N-terminus, the 235-residue chain is Transmembrane protein 215 (235 aa).

A run of 2 helical transmembrane segments spans residues 12-32 (LVVA…VSGM) and 40-60 (IPLL…IALA). Residues 99-146 (SDLESGKGSSDELAKKAGLRGKQLPQGPGEVPMASSVTTPTPTEEGEC) are disordered.

It localises to the membrane. The sequence is that of Transmembrane protein 215 (Tmem215) from Mus musculus (Mouse).